The following is a 170-amino-acid chain: Small ribosomal subunit protein uS15 (170 aa).

The span at 1–10 (MARMHSRKKG) shows a compositional bias: basic residues. Residues 1–20 (MARMHSRKKGSSGSRPPVVD) form a disordered region.

This sequence belongs to the universal ribosomal protein uS15 family. Part of the 30S ribosomal subunit.

The chain is Small ribosomal subunit protein uS15 from Methanothrix thermoacetophila (strain DSM 6194 / JCM 14653 / NBRC 101360 / PT) (Methanosaeta thermophila).